Reading from the N-terminus, the 223-residue chain is Small heat shock protein hspI, mitochondrial (223 aa).

A mitochondrion-targeting transit peptide spans methionine 1–glycine 23. Positions lysine 109–glutamine 223 constitute a sHSP domain.

Belongs to the small heat shock protein (HSP20) family.

The protein resides in the mitochondrion. The sequence is that of Small heat shock protein hspI, mitochondrial (hspI) from Dictyostelium discoideum (Social amoeba).